Reading from the N-terminus, the 709-residue chain is Translation initiation factor IF-2 (709 aa).

Basic and acidic residues-rich tracts occupy residues 47–70 (DHQYRPNTGKKEEKKAEKKTEKPK) and 105–121 (KGKETKKTEAQQQEKKL). The disordered stretch occupies residues 47–157 (DHQYRPNTGK…QPAKKEKELP (111 aa)). The span at 125–137 (AKKKGKGPAKGKK) shows a compositional bias: basic residues. Low complexity predominate over residues 138 to 149 (QAAPAAKQAPQP). A tr-type G domain is found at 240–409 (ERPPVVTIMG…LLVSEMEELK (170 aa)). A G1 region spans residues 249–256 (GHVDHGKT). 249-256 (GHVDHGKT) contributes to the GTP binding site. Positions 274–278 (GITQH) are G2. Residues 295–298 (DTPG) are G3. Residues 295 to 299 (DTPGH) and 349 to 352 (NKID) each bind GTP. The tract at residues 349–352 (NKID) is G4. The tract at residues 385–387 (SAK) is G5.

Belongs to the TRAFAC class translation factor GTPase superfamily. Classic translation factor GTPase family. IF-2 subfamily.

The protein localises to the cytoplasm. Functionally, one of the essential components for the initiation of protein synthesis. Protects formylmethionyl-tRNA from spontaneous hydrolysis and promotes its binding to the 30S ribosomal subunits. Also involved in the hydrolysis of GTP during the formation of the 70S ribosomal complex. This chain is Translation initiation factor IF-2, found in Geobacillus kaustophilus (strain HTA426).